The chain runs to 380 residues: Peptide chain release factor 1-like, mitochondrial (380 aa).

The transit peptide at 1-26 directs the protein to the mitochondrion; it reads MRSRVLWGAARWLWPRRAVGPARRPL. Positions 63–117 form a coiled coil; the sequence is ELLAVIKLLNEKERELRETEHLLHDENEDLRKLAENEITLCQKEITQLKHQIILL. The segment at 236–300 is GGQ domain; the sequence is PKDLRIDTKR…LRAKLYSMHL (65 aa). The GGQ signature appears at 250–252; that stretch reads GGQ. At Gln252 the chain carries N5-methylglutamine.

This sequence belongs to the prokaryotic/mitochondrial release factor family. Post-translationally, methylation of glutamine in the GGQ triplet by HEMK1 is conserved from bacteria to mammals. Expressed in skeletal muscle (at protein level).

Its subcellular location is the mitochondrion. Functionally, mitochondrial peptide chain release factor that directs the termination of translation in response to the peptide chain termination codons UAA and UAG. This is Peptide chain release factor 1-like, mitochondrial from Homo sapiens (Human).